Consider the following 575-residue polypeptide: U3 small nucleolar RNA-associated protein 9 (575 aa).

2 stretches are compositionally biased toward basic and acidic residues: residues 340 to 355 (NEKN…KLEE) and 364 to 375 (VQHEKKETETKI). The disordered stretch occupies residues 340–375 (NEKNNADEADQKKLEEKEEEAQPEVQHEKKETETKI). Residues S547 and S564 each carry the phosphoserine modification.

Interacts with snoRNA U3. Interacts with MPP10. Component of the ribosomal small subunit (SSU) processome composed of at least 40 protein subunits and snoRNA U3. In the absence of snoRNA3, forms a complex with other t-UTPs. This complex can associate with pre-18S ribosomal RNAs.

The protein localises to the nucleus. The protein resides in the nucleolus. Its function is as follows. Involved in nucleolar processing of pre-18S ribosomal RNA. Required for optimal pre-ribosomal RNA transcription by RNA polymerase I together with a subset of U3 proteins required for transcription (t-UTPs). This chain is U3 small nucleolar RNA-associated protein 9 (UTP9), found in Saccharomyces cerevisiae (strain ATCC 204508 / S288c) (Baker's yeast).